The sequence spans 265 residues: 3-methyl-2-oxobutanoate hydroxymethyltransferase (265 aa).

2 residues coordinate Mg(2+): D45 and D84. 3-methyl-2-oxobutanoate contacts are provided by residues 45–46 (DS), D84, and K112. Residue E114 coordinates Mg(2+). Catalysis depends on E181, which acts as the Proton acceptor.

It belongs to the PanB family. Homodecamer; pentamer of dimers. It depends on Mg(2+) as a cofactor.

It is found in the cytoplasm. The enzyme catalyses 3-methyl-2-oxobutanoate + (6R)-5,10-methylene-5,6,7,8-tetrahydrofolate + H2O = 2-dehydropantoate + (6S)-5,6,7,8-tetrahydrofolate. The protein operates within cofactor biosynthesis; (R)-pantothenate biosynthesis; (R)-pantoate from 3-methyl-2-oxobutanoate: step 1/2. In terms of biological role, catalyzes the reversible reaction in which hydroxymethyl group from 5,10-methylenetetrahydrofolate is transferred onto alpha-ketoisovalerate to form ketopantoate. The protein is 3-methyl-2-oxobutanoate hydroxymethyltransferase of Yersinia pestis bv. Antiqua (strain Antiqua).